The following is a 363-amino-acid chain: Putative glutamate--cysteine ligase 2-3 (363 aa).

This sequence belongs to the glutamate--cysteine ligase type 2 family. YbdK subfamily.

The catalysed reaction is L-cysteine + L-glutamate + ATP = gamma-L-glutamyl-L-cysteine + ADP + phosphate + H(+). In terms of biological role, ATP-dependent carboxylate-amine ligase which exhibits weak glutamate--cysteine ligase activity. The polypeptide is Putative glutamate--cysteine ligase 2-3 (Rubrobacter xylanophilus (strain DSM 9941 / JCM 11954 / NBRC 16129 / PRD-1)).